We begin with the raw amino-acid sequence, 403 residues long: Acetate kinase (403 aa).

Asparagine 8 contacts Mg(2+). Lysine 15 is an ATP binding site. Arginine 90 contacts substrate. Catalysis depends on aspartate 147, which acts as the Proton donor/acceptor. Residues 207–211 (HLGSG), 282–284 (DLR), and 330–334 (GVGEN) contribute to the ATP site. Glutamate 384 contributes to the Mg(2+) binding site.

This sequence belongs to the acetokinase family. In terms of assembly, homodimer. Mg(2+) is required as a cofactor. Mn(2+) serves as cofactor.

The protein resides in the cytoplasm. The catalysed reaction is acetate + ATP = acetyl phosphate + ADP. It functions in the pathway metabolic intermediate biosynthesis; acetyl-CoA biosynthesis; acetyl-CoA from acetate: step 1/2. In terms of biological role, catalyzes the formation of acetyl phosphate from acetate and ATP. Can also catalyze the reverse reaction. In Exiguobacterium sp. (strain ATCC BAA-1283 / AT1b), this protein is Acetate kinase.